A 473-amino-acid chain; its full sequence is H(+)/Cl(-) exchange transporter ClcA (473 aa).

The Cytoplasmic portion of the chain corresponds to Met-1–Pro-32. The helical transmembrane segment at Leu-33–Val-69 threads the bilayer. Topologically, residues Gln-70–Phe-76 are periplasmic. The chain crosses the membrane as a helical span at residues Leu-77–Phe-100. A Selectivity filter part_1 motif is present at residues Gly-106–Pro-110. Residue Ser-107 participates in chloride binding. An intramembrane region (helical) is located at residues Ile-109–Leu-116. The Cytoplasmic portion of the chain corresponds to Glu-117–Arg-123. Helical transmembrane passes span Trp-124 to Ala-141 and Glu-148 to Phe-166. Positions Gly-146–Pro-150 match the Selectivity filter part_2 motif. Over Arg-167 to Thr-176 the chain is Cytoplasmic. 2 intramembrane regions (helical) span residues Leu-177–Ala-189 and Pro-193–Ile-201. At Glu-202–Ser-214 the chain is on the cytoplasmic side. A helical membrane pass occupies residues Ile-215 to Phe-232. Residues Asn-233 to Leu-252 are Periplasmic-facing. A helical membrane pass occupies residues Trp-253 to Gln-281. Topologically, residues Arg-282–Glu-287 are cytoplasmic. Residues Ile-288–Glu-309 form a helical membrane-spanning segment. The Periplasmic portion of the chain corresponds to Pro-310 to Ser-329. 2 consecutive transmembrane segments (helical) span residues Val-330–Ser-349 and Gly-355–Ala-376. The short motif at Gly-355 to Pro-359 is the Selectivity filter part_3 element. Ile-356 and Phe-357 together coordinate chloride. The Periplasmic portion of the chain corresponds to Val-377 to Ala-386. The helical intramembrane region spans Gly-387–Ser-401. The note=Loop between two helices intramembrane region spans Val-402–Ala-404. The segment at residues Pro-405–Thr-416 is an intramembrane region (helical). Residues Asp-417–Leu-421 constitute an intramembrane region (note=Loop between two helices). The helical transmembrane segment at Ile-422–Phe-438 threads the bilayer. Over Leu-439–Thr-473 the chain is Cytoplasmic. Tyr-445 contributes to the chloride binding site.

Belongs to the chloride channel (TC 2.A.49) family. ClcA subfamily. In terms of assembly, homodimer.

The protein localises to the cell inner membrane. It catalyses the reaction 2 chloride(in) + H(+)(out) = 2 chloride(out) + H(+)(in). Functionally, proton-coupled chloride transporter. Functions as antiport system and exchanges two chloride ions for 1 proton. Probably acts as an electrical shunt for an outwardly-directed proton pump that is linked to amino acid decarboxylation, as part of the extreme acid resistance (XAR) response. The sequence is that of H(+)/Cl(-) exchange transporter ClcA from Salmonella newport (strain SL254).